The primary structure comprises 666 residues: Probable potassium transport system protein Kup (666 aa).

The next 12 membrane-spanning stretches (helical) occupy residues 16-36, 58-78, 100-120, 141-161, 165-185, 221-241, 253-273, 294-314, 343-363, 373-393, 399-419, and 424-444; these read GFII…LYTM, ISLI…LIAL, PWLI…GALT, IYQN…VLFG, FGTG…FSFL, IFIL…YSDL, WPFV…WILA, VYLV…LISG, LYIP…VLAF, YGLA…YYLI, PILA…FFLA, and FMHG…VMFI.

This sequence belongs to the HAK/KUP transporter (TC 2.A.72) family.

It localises to the cell membrane. It carries out the reaction K(+)(in) + H(+)(in) = K(+)(out) + H(+)(out). Transport of potassium into the cell. Likely operates as a K(+):H(+) symporter. This is Probable potassium transport system protein Kup from Streptococcus pyogenes serotype M4 (strain MGAS10750).